The following is a 912-amino-acid chain: WD repeat-containing protein 44 (912 aa).

The segment covering 1–14 (MASESDTEEFFDAP) has biased composition (acidic residues). Positions 1-25 (MASESDTEEFFDAPEDVHLEGGDPI) are disordered. A2 carries the post-translational modification N-acetylalanine. Residues 2-170 (ASESDTEEFF…SSTAQLNVPE (169 aa)) are binding activity. S3 is modified (phosphoserine). Positions 9-15 (EFFDAPE) match the FFAT-like motif motif. Phosphoserine is present on residues S50, S66, S71, S81, S96, and S126. 2 disordered regions span residues 79-104 (DDSLDSKGKGQSDQATASPVTAGTEL) and 118-152 (QEDSQKAESQDVSEETELESKQCFPSDDTCEKPVD). The span at 89–104 (QSDQATASPVTAGTEL) shows a compositional bias: polar residues. Residue T158 is modified to Phosphothreonine. 5 disordered regions span residues 183 to 202 (VKESDVLESASSHSLSTKDF), 207 to 279 (EVAP…PKEN), 318 to 349 (QENGKAPDGQTIAGEVMGPQRPRSNSGRELTD), 396 to 422 (SNDAAQSDDEEKLQSQQTDTDGGRLKQ), and 457 to 479 (RDEVFHTDQDDPSSSDDEGMPYT). Residues 210–256 (PAKPPRQLTPEPDIVASTKKPVPARPPPPANFPPPRPPPPSRPAPPP) form an important for interaction with ARHGAP26 AND ARHGAP10 region. T218 is modified (phosphothreonine). The segment covering 232–255 (PARPPPPANFPPPRPPPPSRPAPP) has biased composition (pro residues). At S261 the chain carries Phosphoserine. Basic and acidic residues predominate over residues 261 to 277 (SELEFEALKTPDLDVPK). A Phosphothreonine modification is found at T270. Residues 333 to 346 (VMGPQRPRSNSGRE) are important for interaction with RAB11A. An interaction with RAB11 region spans residues 334–504 (MGPQRPRSNS…DFDQIKVVQD (171 aa)). S341 and S343 each carry phosphoserine. Phosphothreonine is present on T348. Residues S402, S469, S470, and S471 each carry the phosphoserine modification. Acidic residues predominate over residues 466–475 (DDPSSSDDEG). Residue Y478 is modified to Phosphotyrosine. The WD 1 repeat unit spans residues 508–547 (EHMGAVWTMKFSHCGRLLASAGQDNVVRIWALKNAFDYFN). Residues 556–592 (EGRVSPSPSQESLNSSKSDTDTGVCSGTDEDPDDKNA) form a disordered region. Residues S560 and S564 each carry the phosphoserine modification. Over residues 560 to 572 (SPSPSQESLNSSK) the composition is skewed to low complexity. WD repeat units follow at residues 604 to 642 (GHTADLLDLSWSKNYFLLSSSMDKTVRLWHISRRECLCC), 644 to 684 (QHID…VALW), 689 to 728 (GQTKLITAANFCQNGKYAVIGTYDGRCIFYDTEHLKYHTQ), 739 to 778 (KVGRKITGIEPLPGENKILVTSNDSRIRLYDLRDLSLSMK), 783 to 822 (VNSSSQIKASFSHDFNYLVSGSEDKYVYIWSTYHDLSKFT), and 871 to 912 (EDAE…KNLS).

In terms of assembly, interacts with the GTP-bound form of RAB11A when membrane-associated. Interacts with GRAF1/ARHGAP26 or GRAF2/ARHGAP10; the interaction connects the endoplasmic reticulum (ER) with the endosomal tubule. Interacts (via FFAT-like motif) with VAPA (via MSP domain) or VAPB (via MSP domain); the interaction connects the ER with the endosomal tubule. Does not bind to other Rab and Rho small G proteins. Post-translationally, phosphorylated by ATK1; the phosphorylation stabilizes its interaction with RAB11A and RAB11B. In terms of tissue distribution, highly expressed in brain.

It is found in the cytoplasm. Its subcellular location is the cytosol. The protein localises to the perinuclear region. The protein resides in the endosome membrane. It localises to the golgi apparatus. It is found in the trans-Golgi network. Its function is as follows. Downstream effector for Rab11 which regulates Rab11 intracellular membrane trafficking functions such as endocytic recycling, intracellular ciliogenesis and protein export. ATK1-mediated phosphorylation of WDR44 induces binding to Rab11 which activates endocytic recycling of transferrin receptor back to the plasma membrane. When bound to Rab11, prevents the formation of the ciliogenic Rab11-Rabin8/RAB3IP-RAB11FIP3 complex, therefore inhibiting preciliary trafficking and ciliogenesis. Participates in neo-synthesized protein export by connecting the endoplasmic reticulum (ER) with the endosomal tubule via direct interactions with the integral ER proteins VAPA or VAPB and the endosomal protein GRAFs (GRAF1/ARHGAP26 or GRAF2/ARHGAP10), which facilitates the transfer of proteins such as E-cadherin, MPP14 and CFTR into a Rab8-Rab10-Rab11-dependent export route. This Bos taurus (Bovine) protein is WD repeat-containing protein 44 (WDR44).